We begin with the raw amino-acid sequence, 431 residues long: Divergent protein kinase domain 1B (431 aa).

Residues 1–30 lie on the Cytoplasmic side of the membrane; it reads MRRLRRLVHLVLLCPFSKGLQGRLPGLRVK. Residues 5 to 6 carry the May mediate ER retention motif; sequence RR. Residues 31–51 traverse the membrane as a helical segment; the sequence is YVLLVWLGIFVGSWMVYVHYS. The Lumenal segment spans residues 52 to 431; sequence SYSELCRGHV…WREISNTNYS (380 aa). Intrachain disulfides connect Cys57–Cys94 and Cys62–Cys117.

This sequence belongs to the DIPK family. In terms of processing, among the many cysteines in the lumenal domain, most are probably involved in disulfide bonds.

It localises to the endoplasmic reticulum membrane. This is Divergent protein kinase domain 1B from Rattus norvegicus (Rat).